Consider the following 95-residue polypeptide: ESAT-6-like protein EsxH (95 aa).

Belongs to the WXG100 family. ESAT-6 subfamily. Forms a tight 1:1 complex with EsxG.

It localises to the secreted. This Mycolicibacterium smegmatis (strain ATCC 700084 / mc(2)155) (Mycobacterium smegmatis) protein is ESAT-6-like protein EsxH.